A 664-amino-acid chain; its full sequence is Semaphorin-7A (664 aa).

Residues 1–44 form the signal peptide; sequence MTPPPPGRAAPSAPRARVLSLPARFGLPLRLRLLLVFWVAAASA. The region spanning 53–488 is the Sema domain; it reads RISAVWKGQD…SQWEVSQVPL (436 aa). Asn102 is a glycosylation site (N-linked (GlcNAc...) asparagine). Cys117 and Cys123 form a disulfide bridge. Arg132 bears the Asymmetric dimethylarginine mark. The cysteines at positions 140 and 149 are disulfide-linked. N-linked (GlcNAc...) asparagine glycosylation is found at Asn154 and Asn256. Intrachain disulfides connect Cys264–Cys364, Cys289–Cys333, Cys491–Cys509, Cys498–Cys539, Cys501–Cys516, Cys564–Cys611, and Cys585–Cys594. The tract at residues 265-267 is interaction with integrins; sequence RGD. Residues 265–267 carry the Cell attachment site motif; that stretch reads RGD. N-linked (GlcNAc...) asparagine glycosylation occurs at Asn328. Residues 542 to 627 form the Ig-like C2-type domain; the sequence is PKPDEAPLQK…YLREAQHWEL (86 aa). A glycan (N-linked (GlcNAc...) asparagine) is linked at Asn600. The GPI-anchor amidated alanine moiety is linked to residue Ala646. Positions 647–664 are cleaved as a propeptide — removed in mature form; the sequence is ASFWLGVLPTLILGLLVH.

It belongs to the semaphorin family. As to quaternary structure, interacts with PLXNC1. Interacts with ITGA1 and ITGB1. In terms of tissue distribution, highly expressed in activated T-cells (at protein level). Highest expression in brain. Lower in heart, thymus, spleen, testis and ovary. The expression increases in late embryonic and postnatal stages. Detected in T-cells.

It is found in the cell membrane. Plays an important role in integrin-mediated signaling and functions both in regulating cell migration and immune responses. Promotes formation of focal adhesion complexes, activation of the protein kinase PTK2/FAK1 and subsequent phosphorylation of MAPK1 and MAPK3. Promotes production of pro-inflammatory cytokines by monocytes and macrophages. Plays an important role in modulating inflammation and T-cell-mediated immune responses. Promotes axon growth in the embryonic olfactory bulb. Promotes attachment, spreading and dendrite outgrowth in melanocytes. The polypeptide is Semaphorin-7A (Sema7a) (Mus musculus (Mouse)).